A 407-amino-acid chain; its full sequence is Phosphopentomutase (407 aa).

Mn(2+) is bound by residues D10, D306, H311, D347, H348, and H359.

The protein belongs to the phosphopentomutase family. Mn(2+) is required as a cofactor.

The protein localises to the cytoplasm. The catalysed reaction is 2-deoxy-alpha-D-ribose 1-phosphate = 2-deoxy-D-ribose 5-phosphate. It carries out the reaction alpha-D-ribose 1-phosphate = D-ribose 5-phosphate. Its pathway is carbohydrate degradation; 2-deoxy-D-ribose 1-phosphate degradation; D-glyceraldehyde 3-phosphate and acetaldehyde from 2-deoxy-alpha-D-ribose 1-phosphate: step 1/2. Functionally, isomerase that catalyzes the conversion of deoxy-ribose 1-phosphate (dRib-1-P) and ribose 1-phosphate (Rib-1-P) to deoxy-ribose 5-phosphate (dRib-5-P) and ribose 5-phosphate (Rib-5-P), respectively. The sequence is that of Phosphopentomutase from Salmonella paratyphi C (strain RKS4594).